A 454-amino-acid chain; its full sequence is Bifunctional protein GlmU (454 aa).

Residues 1–228 (MTLPLHVVIL…PQDVEGANDP (228 aa)) are pyrophosphorylase. Residues 10-13 (LAAG), lysine 24, glutamine 76, 81-82 (GT), 103-105 (YGD), glycine 138, glutamate 153, asparagine 168, and asparagine 226 each bind UDP-N-acetyl-alpha-D-glucosamine. Residue aspartate 105 participates in Mg(2+) binding. Asparagine 226 is a binding site for Mg(2+). Residues 229–249 (WQLAQLERAWQLRAARALCLQ) form a linker region. The segment at 250–454 (GVRMADPARV…IEGWERPKKK (205 aa)) is N-acetyltransferase. Positions 332 and 350 each coordinate UDP-N-acetyl-alpha-D-glucosamine. The Proton acceptor role is filled by histidine 362. Tyrosine 365 and asparagine 376 together coordinate UDP-N-acetyl-alpha-D-glucosamine. Acetyl-CoA-binding positions include alanine 379, 385 to 386 (NY), serine 404, alanine 422, and arginine 439.

The protein in the N-terminal section; belongs to the N-acetylglucosamine-1-phosphate uridyltransferase family. This sequence in the C-terminal section; belongs to the transferase hexapeptide repeat family. Homotrimer. Mg(2+) is required as a cofactor.

The protein resides in the cytoplasm. The catalysed reaction is alpha-D-glucosamine 1-phosphate + acetyl-CoA = N-acetyl-alpha-D-glucosamine 1-phosphate + CoA + H(+). It catalyses the reaction N-acetyl-alpha-D-glucosamine 1-phosphate + UTP + H(+) = UDP-N-acetyl-alpha-D-glucosamine + diphosphate. The protein operates within nucleotide-sugar biosynthesis; UDP-N-acetyl-alpha-D-glucosamine biosynthesis; N-acetyl-alpha-D-glucosamine 1-phosphate from alpha-D-glucosamine 6-phosphate (route II): step 2/2. It functions in the pathway nucleotide-sugar biosynthesis; UDP-N-acetyl-alpha-D-glucosamine biosynthesis; UDP-N-acetyl-alpha-D-glucosamine from N-acetyl-alpha-D-glucosamine 1-phosphate: step 1/1. Its pathway is bacterial outer membrane biogenesis; LPS lipid A biosynthesis. Functionally, catalyzes the last two sequential reactions in the de novo biosynthetic pathway for UDP-N-acetylglucosamine (UDP-GlcNAc). The C-terminal domain catalyzes the transfer of acetyl group from acetyl coenzyme A to glucosamine-1-phosphate (GlcN-1-P) to produce N-acetylglucosamine-1-phosphate (GlcNAc-1-P), which is converted into UDP-GlcNAc by the transfer of uridine 5-monophosphate (from uridine 5-triphosphate), a reaction catalyzed by the N-terminal domain. This chain is Bifunctional protein GlmU, found in Xanthomonas campestris pv. campestris (strain B100).